The primary structure comprises 239 residues: Transcriptional regulatory protein BtsR (239 aa).

One can recognise a Response regulatory domain in the interval 3-116; the sequence is KVLIVDDEPL…RLEKTLHRLR (114 aa). Residue Asp54 is modified to 4-aspartylphosphate. Residues 137–239 form the HTH LytTR-type domain; it reads IPCTGHSRIY…LKSLKEAIGL (103 aa).

Post-translationally, phosphorylated by BtsS.

In terms of biological role, member of the two-component regulatory system BtsS/BtsR. BtsR regulates expression of btsT by binding to its promoter region. This Salmonella typhi protein is Transcriptional regulatory protein BtsR.